Consider the following 392-residue polypeptide: DNA replication and repair protein RecF (392 aa).

ATP is bound at residue 30 to 37 (GPNAAGKT).

Belongs to the RecF family.

The protein localises to the cytoplasm. Functionally, the RecF protein is involved in DNA metabolism; it is required for DNA replication and normal SOS inducibility. RecF binds preferentially to single-stranded, linear DNA. It also seems to bind ATP. In Chloroflexus aggregans (strain MD-66 / DSM 9485), this protein is DNA replication and repair protein RecF.